The following is a 197-amino-acid chain: HTH-type transcriptional regulator BetI (197 aa).

In terms of domain architecture, HTH tetR-type spans 8 to 68; the sequence is PIRRQQLIQA…ATMRHLMNAL (61 aa). The H-T-H motif DNA-binding region spans 31 to 50; sequence SIALIARLAGVSNGIISHYF.

It participates in amine and polyamine biosynthesis; betaine biosynthesis via choline pathway [regulation]. Its function is as follows. Repressor involved in the biosynthesis of the osmoprotectant glycine betaine. It represses transcription of the choline transporter BetT and the genes of BetAB involved in the synthesis of glycine betaine. This is HTH-type transcriptional regulator BetI from Pseudomonas savastanoi pv. phaseolicola (strain 1448A / Race 6) (Pseudomonas syringae pv. phaseolicola (strain 1448A / Race 6)).